The chain runs to 545 residues: Chaperonin GroEL (545 aa).

ATP contacts are provided by residues 30-33 (TLGP), Lys-51, 87-91 (DGTTT), Gly-415, and Asp-496.

It belongs to the chaperonin (HSP60) family. In terms of assembly, forms a cylinder of 14 subunits composed of two heptameric rings stacked back-to-back. Interacts with the co-chaperonin GroES.

The protein resides in the cytoplasm. The catalysed reaction is ATP + H2O + a folded polypeptide = ADP + phosphate + an unfolded polypeptide.. Together with its co-chaperonin GroES, plays an essential role in assisting protein folding. The GroEL-GroES system forms a nano-cage that allows encapsulation of the non-native substrate proteins and provides a physical environment optimized to promote and accelerate protein folding. The sequence is that of Chaperonin GroEL from Chlorobaculum tepidum (strain ATCC 49652 / DSM 12025 / NBRC 103806 / TLS) (Chlorobium tepidum).